We begin with the raw amino-acid sequence, 702 residues long: MADS-box MEF2 type transcription factor MIG1 (702 aa).

The MADS-box domain maps to 1-61; it reads MGRRKIEIKA…KKLYEYSSGD (61 aa). Disordered regions lie at residues 73 to 608 and 658 to 702; these read GGAT…NIDT and PSFL…KVDS. Acidic residues predominate over residues 86–96; the sequence is GGDDDDEEEGD. The span at 132–144 shows a compositional bias: pro residues; sequence ASPPIPNGVPFPP. The segment covering 145–155 has biased composition (low complexity); the sequence is HGHGVPRGHTP. Residues 180–195 are compositionally biased toward polar residues; it reads GSPQVNGFGFGQQQSM. Positions 201–241 are enriched in pro residues; that stretch reads TTMPPHMPPQMAPGPPFPYPQHPQHPPHPPHPPHPPHPQQP. Composition is skewed to low complexity over residues 273-284, 326-343, and 350-371; these read PMGMQRHSVSPP, ESPQ…QQPE, and EQQQ…QSEP. Over residues 456–465 the composition is skewed to polar residues; it reads VDESTSNASE. 2 stretches are compositionally biased toward low complexity: residues 487 to 512 and 530 to 553; these read RASI…SLRA and DGSG…DATS. Residues 554–567 show a composition bias toward polar residues; that stretch reads QSTRQNDSHSSTNM. Pro residues predominate over residues 587-600; sequence PPNPFAPKRPPQHP. Over residues 693-702 the composition is skewed to basic and acidic residues; the sequence is NEPKRVKVDS.

Belongs to the MEF2 family. In terms of assembly, interacts with MAPK MPS1.

It is found in the nucleus. Transcription factor acting downstream of the MPS1 MAP kinase (MAPK) cascade during conidiation and plant infection. Required for overcoming plant defense responses and the differentiation of secondary infectious hyphae in live plant cells. In Pyricularia oryzae (Rice blast fungus), this protein is MADS-box MEF2 type transcription factor MIG1.